The chain runs to 261 residues: Calbindin (261 aa).

Ala-2 carries the post-translational modification N-acetylalanine. The interval 2-7 is interaction with RANBP9; the sequence is AESHLQ. EF-hand domains lie at 11 to 46, 53 to 88, 98 to 133, 142 to 177, and 186 to 221; these read ITAS…LQQA, ELSP…EENF, KSCE…LLEK, KLAE…QENF, and MCGK…LCEK. 5 residues coordinate Ca(2+): Asp-24, Asp-26, Ser-28, Tyr-30, and Glu-35. Asp-111, Asp-113, Glu-122, Asp-155, Asn-157, Asp-159, Lys-161, Glu-166, Asp-199, Asp-201, Asn-203, Tyr-205, and Glu-210 together coordinate Ca(2+).

The protein belongs to the calbindin family. Interacts with RANBP9.

Buffers cytosolic calcium. May stimulate a membrane Ca(2+)-ATPase and a 3',5'-cyclic nucleotide phosphodiesterase. This chain is Calbindin (CALB1), found in Pongo abelii (Sumatran orangutan).